The chain runs to 428 residues: GTPase Obg (428 aa).

The 158-residue stretch at 1–158 (MFVDQVKIYV…RDVILELKVL (158 aa)) folds into the Obg domain. An OBG-type G domain is found at 159–329 (ADVGLVGFPS…LLFEVANLIE (171 aa)). GTP-binding positions include 165–172 (GFPSVGKS), 190–194 (FTTIV), 212–215 (DLPG), 282–285 (NKMD), and 310–312 (SAV). Mg(2+)-binding residues include serine 172 and threonine 192. One can recognise an OCT domain in the interval 350 to 428 (KFETEGVKFD…ILEYEFEFID (79 aa)).

Belongs to the TRAFAC class OBG-HflX-like GTPase superfamily. OBG GTPase family. Monomer. Requires Mg(2+) as cofactor.

The protein resides in the cytoplasm. An essential GTPase which binds GTP, GDP and possibly (p)ppGpp with moderate affinity, with high nucleotide exchange rates and a fairly low GTP hydrolysis rate. Plays a role in control of the cell cycle, stress response, ribosome biogenesis and in those bacteria that undergo differentiation, in morphogenesis control. The chain is GTPase Obg from Bacillus cereus (strain AH820).